The sequence spans 198 residues: Recombination protein RecR (198 aa).

A C4-type zinc finger spans residues 57–72 (CSICGRLTDDDPCSIC). In terms of domain architecture, Toprim spans 80 to 175 (TTILVLEDSR…KVTRLARGLA (96 aa)).

The protein belongs to the RecR family.

May play a role in DNA repair. It seems to be involved in an RecBC-independent recombinational process of DNA repair. It may act with RecF and RecO. This chain is Recombination protein RecR, found in Streptococcus pneumoniae (strain 70585).